The following is a 221-amino-acid chain: Nuclear phosphoprotein UL3 homolog (221 aa).

Belongs to the alphaherpesvirinae HHV-1 UL3 family. Post-translationally, phosphorylated.

The protein resides in the host nucleus. This chain is Nuclear phosphoprotein UL3 homolog, found in Varicella-zoster virus (strain Dumas) (HHV-3).